The sequence spans 96 residues: UPF0235 protein YggU (96 aa).

This sequence belongs to the UPF0235 family.

The polypeptide is UPF0235 protein YggU (Escherichia coli O127:H6 (strain E2348/69 / EPEC)).